The following is a 350-amino-acid chain: Melatonin receptor type 1A-A (350 aa).

Residues methionine 1–threonine 29 lie on the Extracellular side of the membrane. Residues asparagine 4 and asparagine 9 are each glycosylated (N-linked (GlcNAc...) asparagine). A helical transmembrane segment spans residues leucine 30–phenylalanine 50. Topologically, residues serine 51–asparagine 63 are cytoplasmic. A helical membrane pass occupies residues isoleucine 64–valine 84. Residues leucine 85 to glutamine 101 are Extracellular-facing. An intrachain disulfide couples cysteine 100 to cysteine 177. The chain crosses the membrane as a helical span at residues isoleucine 102–alanine 122. Residues isoleucine 123–serine 144 are Cytoplasmic-facing. A helical membrane pass occupies residues valine 145–valine 165. Topologically, residues glycine 166 to tyrosine 187 are extracellular. The helical transmembrane segment at threonine 188–leucine 208 threads the bilayer. Residues arginine 209 to methionine 240 are Cytoplasmic-facing. A helical transmembrane segment spans residues phenylalanine 241–valine 261. At alanine 262–arginine 267 the chain is on the extracellular side. Residues valine 268–serine 288 traverse the membrane as a helical segment. Residues cysteine 289–valine 350 lie on the Cytoplasmic side of the membrane.

This sequence belongs to the G-protein coupled receptor 1 family.

It is found in the cell membrane. Functionally, high affinity receptor for melatonin. The activity of this receptor is mediated by pertussis toxin sensitive G proteins that inhibits adenylate cyclase activity. The sequence is that of Melatonin receptor type 1A-A (mtnr1aa) from Danio rerio (Zebrafish).